The primary structure comprises 388 residues: CUE domain-containing protein 1 (388 aa).

Residues 1–10 show a composition bias toward low complexity; sequence MTSLFRRSSS. A disordered region spans residues 1–45; sequence MTSLFRRSSSGSGGGGATGARGAGTGAGDGSTAPQELNNSRPARQ. The span at 11–29 shows a compositional bias: gly residues; the sequence is GSGGGGATGARGAGTGAGD. In terms of domain architecture, CUE spans 50-93; the sequence is EFNQAMDDFKTMFPNMDYDIIECVLRANSGAVDATIDQLLQMNL. Disordered stretches follow at residues 152 to 178, 196 to 225, 270 to 302, and 369 to 388; these read PTPPPRIDVPGSGQPASQRRYRNWNPP, DSIQGHPGGSKPMSGEGGPPPAPGPMACDQ, SQKSKSNNAAVGNDGGFPSSVPGTSETNPTVSE, and DFRGRRQEVPKVEEALREGQ. Residues 290–300 show a composition bias toward polar residues; it reads VPGTSETNPTV.

In Mus musculus (Mouse), this protein is CUE domain-containing protein 1 (Cuedc1).